The chain runs to 190 residues: Xanthine phosphoribosyltransferase (190 aa).

Xanthine is bound by residues Leu-20 and Asn-27. 129-133 (ASGSA) is a 5-phospho-alpha-D-ribose 1-diphosphate binding site. Residue Lys-157 participates in xanthine binding.

Belongs to the purine/pyrimidine phosphoribosyltransferase family. Xpt subfamily. In terms of assembly, homodimer.

The protein resides in the cytoplasm. It carries out the reaction XMP + diphosphate = xanthine + 5-phospho-alpha-D-ribose 1-diphosphate. It participates in purine metabolism; XMP biosynthesis via salvage pathway; XMP from xanthine: step 1/1. Converts the preformed base xanthine, a product of nucleic acid breakdown, to xanthosine 5'-monophosphate (XMP), so it can be reused for RNA or DNA synthesis. This is Xanthine phosphoribosyltransferase from Clostridium tetani (strain Massachusetts / E88).